The following is a 405-amino-acid chain: L-carnitine CoA-transferase (405 aa).

CoA contacts are provided by Lys-97 and Arg-104. The Nucleophile role is filled by Asp-169.

It belongs to the CoA-transferase III family. CaiB subfamily. As to quaternary structure, homodimer.

Its subcellular location is the cytoplasm. It carries out the reaction crotonobetainyl-CoA + (R)-carnitine = crotonobetaine + (R)-carnitinyl-CoA. It catalyses the reaction 4-(trimethylamino)butanoyl-CoA + (R)-carnitine = (R)-carnitinyl-CoA + 4-(trimethylamino)butanoate. Its pathway is amine and polyamine metabolism; carnitine metabolism. Its function is as follows. Catalyzes the reversible transfer of the CoA moiety from gamma-butyrobetainyl-CoA to L-carnitine to generate L-carnitinyl-CoA and gamma-butyrobetaine. Is also able to catalyze the reversible transfer of the CoA moiety from gamma-butyrobetainyl-CoA or L-carnitinyl-CoA to crotonobetaine to generate crotonobetainyl-CoA. The chain is L-carnitine CoA-transferase from Escherichia coli O139:H28 (strain E24377A / ETEC).